The following is a 268-amino-acid chain: Tryptophan synthase alpha chain (268 aa).

Catalysis depends on proton acceptor residues Glu-49 and Asp-60.

Belongs to the TrpA family. Tetramer of two alpha and two beta chains.

It catalyses the reaction (1S,2R)-1-C-(indol-3-yl)glycerol 3-phosphate + L-serine = D-glyceraldehyde 3-phosphate + L-tryptophan + H2O. It participates in amino-acid biosynthesis; L-tryptophan biosynthesis; L-tryptophan from chorismate: step 5/5. Its function is as follows. The alpha subunit is responsible for the aldol cleavage of indoleglycerol phosphate to indole and glyceraldehyde 3-phosphate. The protein is Tryptophan synthase alpha chain of Aliivibrio fischeri (strain ATCC 700601 / ES114) (Vibrio fischeri).